A 136-amino-acid chain; its full sequence is Histone H3, embryonic (136 aa).

Residues 1–43 (MARTKQTARKSTGGKAPRKQLATKAARKSAPATGGVKKPHRYR) are disordered. Lysine 5 carries the post-translational modification N6-methylated lysine. Lysine 10 is modified (N6-acetyllysine; alternate). Residue lysine 10 is modified to N6-methylated lysine; alternate. Serine 11 is subject to Phosphoserine. An N6-acetyllysine mark is found at lysine 15 and lysine 24. Lysine 28, lysine 37, and lysine 80 each carry N6-methylated lysine.

The protein belongs to the histone H3 family. The nucleosome is a histone octamer containing two molecules each of H2A, H2B, H3 and H4 assembled in one H3-H4 heterotetramer and two H2A-H2B heterodimers. The octamer wraps approximately 147 bp of DNA. In terms of processing, acetylation is generally linked to gene activation. Methylation at Lys-5 is linked to gene activation. Methylation at Lys-10 is linked to gene repression.

It is found in the nucleus. Its subcellular location is the chromosome. In terms of biological role, core component of nucleosome. Nucleosomes wrap and compact DNA into chromatin, limiting DNA accessibility to the cellular machineries which require DNA as a template. Histones thereby play a central role in transcription regulation, DNA repair, DNA replication and chromosomal stability. DNA accessibility is regulated via a complex set of post-translational modifications of histones, also called histone code, and nucleosome remodeling. The chain is Histone H3, embryonic from Strongylocentrotus purpuratus (Purple sea urchin).